The sequence spans 159 residues: Protein-export protein SecB (159 aa).

This sequence belongs to the SecB family. Homotetramer, a dimer of dimers. One homotetramer interacts with 1 SecA dimer.

The protein localises to the cytoplasm. In terms of biological role, one of the proteins required for the normal export of preproteins out of the cell cytoplasm. It is a molecular chaperone that binds to a subset of precursor proteins, maintaining them in a translocation-competent state. It also specifically binds to its receptor SecA. In Nitrobacter winogradskyi (strain ATCC 25391 / DSM 10237 / CIP 104748 / NCIMB 11846 / Nb-255), this protein is Protein-export protein SecB.